The primary structure comprises 474 residues: Phenylalanine--tRNA ligase alpha subunit (474 aa).

L-phenylalanine-binding positions include threonine 317, 356 to 358, and tyrosine 396; that span reads QLE. Residue glutamate 398 coordinates Mg(2+). Phenylalanine 421 is a binding site for L-phenylalanine.

Belongs to the class-II aminoacyl-tRNA synthetase family. Phe-tRNA synthetase alpha subunit type 2 subfamily. As to quaternary structure, tetramer of two alpha and two beta subunits. It depends on Mg(2+) as a cofactor.

Its subcellular location is the cytoplasm. The catalysed reaction is tRNA(Phe) + L-phenylalanine + ATP = L-phenylalanyl-tRNA(Phe) + AMP + diphosphate + H(+). In Archaeoglobus fulgidus (strain ATCC 49558 / DSM 4304 / JCM 9628 / NBRC 100126 / VC-16), this protein is Phenylalanine--tRNA ligase alpha subunit.